A 1083-amino-acid chain; its full sequence is Centrosomal protein of 131 kDa (1083 aa).

2 disordered regions span residues 1-155 and 220-258; these read MKGT…AGPR and GSESSGFGKLPKNVSSATHSARNNTGGSTGLPRRKEVTE. The tract at residues 1-250 is interaction with PLK4; that stretch reads MKGTRAIGSV…RNNTGGSTGL (250 aa). 2 positions are modified to phosphoserine: S14 and S35. Position 47 is a phosphoserine; by MAPKAPK2 (S47). Polar residues predominate over residues 68–87; that stretch reads QAINNLRRSNSTTQVSQPRS. Position 78 is a phosphoserine; by MAPKAPK2 and PLK4 (S78). 5 positions are modified to phosphoserine: S89, S105, S114, S146, and S150. Polar residues predominate over residues 138–148; sequence LPSNARSSSAL. Over residues 232-245 the composition is skewed to polar residues; that stretch reads NVSSATHSARNNTG. Residues 269–289 enclose the IQ domain; the sequence is NQATVTIQRWYRHQVQRRGAG. A disordered region spans residues 301–429; sequence REEQRQRSGE…PQQPPEDRTQ (129 aa). 2 stretches are compositionally biased toward basic and acidic residues: residues 317–333 and 360–369; these read HQQKEAARRKAREEKAR and GPPENPRETR. A Phosphoserine modification is found at S381. Residue T383 is modified to Phosphothreonine. A phosphoserine mark is found at S453, S489, D496, S499, S731, and S798. Residues 1047 to 1076 are compositionally biased toward basic and acidic residues; it reads KEEAVSSLRTQHEAAVKRADHLEELLEQHR. A disordered region spans residues 1047-1083; that stretch reads KEEAVSSLRTQHEAAVKRADHLEELLEQHRRPTPSTK.

This sequence belongs to the CEP131 family. Self-associates. Associates with the centriolar satellite BBSome protein complex. Interacts with BBS4; the interaction limits BBS4 availability for association with the BBSome complex, and hence negatively regulates ciliary localization of the BBSome complex. Interacts with MIB1. Interacts with PCM1; the interaction increases in response to ultraviolet light (UV) radiation. Associates with microtubules; association with microtubules is reduced in response to cellular stress, such as UV stimulation, in a process that requires p38 MAP kinase signaling. Interacts with CEP290, DCTN1, PCNT, PCM1 and CEP152. Interacts with 14-3-3 proteins following UV-induced phosphorylation by MAPKAPK2; this inhibits formation of novel centriolar satellites. Interacts with SDCCAG8. Interacts with CCDC61. Interacts with PLK4. Ubiquitinated. Undergoes monoubiquitination catalyzed by the E3 ubiquitin-protein ligase MIB1 in proliferating cells, preventing cilia formation. Monoubiquitination by MIB1 is inhibited in response to cellular stress, such as ultraviolet light (UV) radiation or heat shock, resulting in cilia formation initiation. Post-translationally, MAPKAPK2-dependent phosphorylation at Ser-47 and Ser-78 occurs in response to cellular stress such as exposure to ultraviolet irradiation and promotes binding to 14-3-3 proteins which leads to cytoplasmic sequestration of CEP131 and blocks formation of new centriolar satellites. Phosphorylation at Ser-78 mediated by PLK4 is essential for proper organization and integrity of centriolar satellites but is dispensable for its localization to centrioles and its function in ciliogenesis.

The protein resides in the cytoplasm. It is found in the cytoskeleton. Its subcellular location is the microtubule organizing center. The protein localises to the centrosome. It localises to the centriolar satellite. The protein resides in the centriole. It is found in the cilium basal body. Its subcellular location is the cytoplasmic vesicle. The protein localises to the secretory vesicle. It localises to the acrosome. Its function is as follows. Component of centriolar satellites contributing to the building of a complex and dynamic network required to regulate cilia/flagellum formation. In proliferating cells, MIB1-mediated ubiquitination induces its sequestration within centriolar satellites, precluding untimely cilia formation initiation. In contrast, during normal and ultraviolet or heat shock cellular stress-induced ciliogenesis, its non-ubiquitinated form is rapidly displaced from centriolar satellites and recruited to centrosome/basal bodies in a microtubule- and p38 MAPK-dependent manner. Also acts as a negative regulator of BBSome ciliary trafficking. Plays a role in sperm flagellar formation; may be involved in the regulation of intraflagellar transport (IFT) and/or intramanchette (IMT) trafficking, which are important for axoneme extension and/or cargo delivery to the nascent sperm tail. Required for optimal cell proliferation and cell cycle progression; may play a role in the regulation of genome stability in non-ciliogenic cells. Involved in centriole duplication. Required for CEP152, WDR62 and CEP63 centrosomal localization and promotes the centrosomal localization of CDK2. Essential for maintaining proper centriolar satellite integrity. This Homo sapiens (Human) protein is Centrosomal protein of 131 kDa (CEP131).